The chain runs to 491 residues: UDP-N-acetylmuramate--L-alanine ligase (491 aa).

126-132 (GTHGKTT) provides a ligand contact to ATP.

The protein belongs to the MurCDEF family.

Its subcellular location is the cytoplasm. It catalyses the reaction UDP-N-acetyl-alpha-D-muramate + L-alanine + ATP = UDP-N-acetyl-alpha-D-muramoyl-L-alanine + ADP + phosphate + H(+). It participates in cell wall biogenesis; peptidoglycan biosynthesis. Cell wall formation. This chain is UDP-N-acetylmuramate--L-alanine ligase, found in Klebsiella pneumoniae (strain 342).